The chain runs to 38 residues: Large ribosomal subunit protein bL36 (38 aa).

The protein belongs to the bacterial ribosomal protein bL36 family.

This chain is Large ribosomal subunit protein bL36, found in Lactobacillus acidophilus (strain ATCC 700396 / NCK56 / N2 / NCFM).